The chain runs to 291 residues: ATP synthase gamma chain (291 aa).

This sequence belongs to the ATPase gamma chain family. In terms of assembly, F-type ATPases have 2 components, CF(1) - the catalytic core - and CF(0) - the membrane proton channel. CF(1) has five subunits: alpha(3), beta(3), gamma(1), delta(1), epsilon(1). CF(0) has three main subunits: a, b and c.

Its subcellular location is the cell inner membrane. Produces ATP from ADP in the presence of a proton gradient across the membrane. The gamma chain is believed to be important in regulating ATPase activity and the flow of protons through the CF(0) complex. The polypeptide is ATP synthase gamma chain (Rhodopseudomonas palustris (strain BisB5)).